A 195-amino-acid chain; its full sequence is MTRSYRGDRRTKETDIELILNLDGKGQGKIATGIGFFDHMLEQIMKHGQLDLELKAVGDIEVDFHHTVEDVGILMGKAIAEALGDKKGIVRYATAFIPMDEALSMVSMDISGRPFLQYGVNYSGEFVGQFEVQLVEEFFRALAFNSGITLHIQTQYGRNNHHIVESIFKAFAKALREAITIDPRIEGVLSTKGSL.

Belongs to the imidazoleglycerol-phosphate dehydratase family.

Its subcellular location is the cytoplasm. It catalyses the reaction D-erythro-1-(imidazol-4-yl)glycerol 3-phosphate = 3-(imidazol-4-yl)-2-oxopropyl phosphate + H2O. The protein operates within amino-acid biosynthesis; L-histidine biosynthesis; L-histidine from 5-phospho-alpha-D-ribose 1-diphosphate: step 6/9. The sequence is that of Imidazoleglycerol-phosphate dehydratase from Alkaliphilus metalliredigens (strain QYMF).